Here is a 367-residue protein sequence, read N- to C-terminus: Chorismate synthase (367 aa).

2 residues coordinate NADP(+): Arg-48 and Arg-54. FMN is bound by residues 125 to 127, 238 to 239, Gly-278, 293 to 297, and Arg-319; these read RSS, NA, and KPTSS.

The protein belongs to the chorismate synthase family. In terms of assembly, homotetramer. FMNH2 serves as cofactor.

The enzyme catalyses 5-O-(1-carboxyvinyl)-3-phosphoshikimate = chorismate + phosphate. Its pathway is metabolic intermediate biosynthesis; chorismate biosynthesis; chorismate from D-erythrose 4-phosphate and phosphoenolpyruvate: step 7/7. Its function is as follows. Catalyzes the anti-1,4-elimination of the C-3 phosphate and the C-6 proR hydrogen from 5-enolpyruvylshikimate-3-phosphate (EPSP) to yield chorismate, which is the branch point compound that serves as the starting substrate for the three terminal pathways of aromatic amino acid biosynthesis. This reaction introduces a second double bond into the aromatic ring system. In Xanthomonas campestris pv. campestris (strain B100), this protein is Chorismate synthase.